The sequence spans 1045 residues: Pre-mRNA-splicing factor ATP-dependent RNA helicase DHX16 (1045 aa).

The disordered stretch occupies residues 101 to 211 (EDSEESSEEA…ERSDKKAYEE (111 aa)). A phosphoserine mark is found at serine 103, serine 106, and serine 107. Basic residues predominate over residues 119–131 (QKKRKKRKHLRKK). Acidic residues predominate over residues 135 to 144 (EEEEEEEEEV). Residue serine 164 is modified to Phosphoserine. The segment covering 170–211 (RTERERLQDLEERDAFAERVRQRDKDRTRNVLERSDKKAYEE) has biased composition (basic and acidic residues). Residues 413 to 577 (LAAVANHQIL…FDDAPVFRIP (165 aa)) enclose the Helicase ATP-binding domain. 426–433 (GETGSGKT) contributes to the ATP binding site. Residues 524–527 (DEAH) carry the DEAH box motif. The region spanning 602–775 (SVLQIHVTQP…NVVLLLKSLG (174 aa)) is the Helicase C-terminal domain. At threonine 716 the chain carries Phosphothreonine. A disordered region spans residues 1026–1045 (EDPHAKKMPKKTGKTREELG).

It belongs to the DEAD box helicase family. DEAH subfamily. DDX16/PRP8 sub-subfamily. As to quaternary structure, component of pre-catalytic spliceosome complexes. Component of the minor spliceosome, which splices U12-type introns. Interacts with GPKOW. Interacts with TRIM6. Interacts with RIGI.

Its subcellular location is the nucleus. It localises to the nucleoplasm. The protein resides in the cytoplasm. The enzyme catalyses ATP + H2O = ADP + phosphate + H(+). Functionally, required for pre-mRNA splicing as a component of the spliceosome. Contributes to pre-mRNA splicing after spliceosome formation and prior to the first transesterification reaction. As a component of the minor spliceosome, involved in the splicing of U12-type introns in pre-mRNAs. Also plays a role in innate antiviral response by acting as a pattern recognition receptor sensing splicing signals in viral RNA. Mechanistically, TRIM6 promotes the interaction between unanchored 'Lys-48'-polyubiquitin chains and DHX16, leading to DHX16 interaction with RIGI and ssRNA to amplify RIGI-dependent innate antiviral immune responses. The polypeptide is Pre-mRNA-splicing factor ATP-dependent RNA helicase DHX16 (DHX16) (Sus scrofa (Pig)).